Here is a 203-residue protein sequence, read N- to C-terminus: Large ribosomal subunit protein bL25 (203 aa).

It belongs to the bacterial ribosomal protein bL25 family. CTC subfamily. Part of the 50S ribosomal subunit; part of the 5S rRNA/L5/L18/L25 subcomplex. Contacts the 5S rRNA. Binds to the 5S rRNA independently of L5 and L18.

This is one of the proteins that binds to the 5S RNA in the ribosome where it forms part of the central protuberance. The sequence is that of Large ribosomal subunit protein bL25 from Cereibacter sphaeroides (strain ATCC 17029 / ATH 2.4.9) (Rhodobacter sphaeroides).